The sequence spans 381 residues: Homoserine O-succinyltransferase (381 aa).

The 316-residue stretch at 45–360 (NAVLVCHALN…PHGHDAFLLD (316 aa)) folds into the AB hydrolase-1 domain. Residue Ser-151 is the Nucleophile of the active site. Residue Arg-221 participates in substrate binding. Catalysis depends on residues Asp-321 and His-354. Substrate is bound at residue Asp-355.

It belongs to the AB hydrolase superfamily. MetX family. As to quaternary structure, homodimer.

Its subcellular location is the cytoplasm. It carries out the reaction L-homoserine + succinyl-CoA = O-succinyl-L-homoserine + CoA. It participates in amino-acid biosynthesis; L-methionine biosynthesis via de novo pathway; O-succinyl-L-homoserine from L-homoserine: step 1/1. Functionally, transfers a succinyl group from succinyl-CoA to L-homoserine, forming succinyl-L-homoserine. This Burkholderia cenocepacia (strain ATCC BAA-245 / DSM 16553 / LMG 16656 / NCTC 13227 / J2315 / CF5610) (Burkholderia cepacia (strain J2315)) protein is Homoserine O-succinyltransferase.